The following is a 1015-amino-acid chain: MTIRLNKVTRDLNVGIATVVEFLQKKGYTVEANPNTKITEEQYAMLVKEFSTDKNLRLESERFIQERQNKDRNKASVSIDGYDKKEPEKTVADDVIKTVIPEDVRPKFKPVGKIDLDKLNRKVEKEPVKEEPKPQPVAAEEKKVAEEVKPVVNEVKKEEVTVTPATSEPKPVKEEPKPVVVEKPVETEKKVVEEVKKEEPKVVVSPEKTEKKEEKPVAEAPVTPVEKEEEGVFKIRPTEFVSKINVIGQIDLAALNQSTRPKKKSKEEKRKEREEKEKLRQDQKKQMKEAIIKEIRKEDSKQAKVVGKENLDPNGKKKRNRINNNKEKVDVNNVASNFAHPTPNSERTNNNRGGNQQGGGGQNRNRNNNNKDRFKKPVVKQEVSEEDVAKQVKETLARLTSKGKNKGAKYRKEKRDMASNRMQELEDQEMAESKVLKLTEFVTANELASMMNVSVNQVIGTCMSIGMMVSINQRLDAETINLVAEEFGFKTEYVSAEVAQAIVEEEDAPEDLEHRAPIVTVMGHVDHGKTSLLDYIRKANVIAGEAGGITQHIGAYHVTLEDGRKITFLDTPGHEAFTAMRARGAKVTDIAIIIVAADDDVMPQTKEAINHAAAAGVPIVFAINKIDKPHANPEKIKETLAQMNYLVEEWGGKYQSQDISAKKGLGVPELMEKVLLEAEMLDLKANPNRNATGSIIESTLDKGRGYVATVLVSNGTLKVGDIVLAGTSYGRVKAMFNERNQRVAQAGPSEPVLILGLNGAPAAGDTFHVIETDQEAREIANKREQLQREQGLRTQKLLTLDEVGRRIALGNFQELNVIVKGDVDGSIEALSDSLIKLSTEQIQVNVIHKAVGQISESDVTLAAASDAIIIGFQVRPSASARKFAEQEGVDIRLYSVIYAAIEEVKAAMEGMLAPEVKEVVTATIEVREVFHITKVGTVAGAVVKEGKVKRSDKARLIRDGIVIFSGSINALKRFKDDVKEVGTNFECGISLVNYNDLKVGDMIETYEEVEVKQTL.

4 disordered regions span residues 124–144 (EKEPVKEEPKPQPVAAEEKKV), 159–179 (EVTVTPATSEPKPVKEEPKPV), 196–230 (KKEEPKVVVSPEKTEKKEEKPVAEAPVTPVEKEEE), and 250–386 (IDLA…VSEE). Basic and acidic residues-rich tracts occupy residues 196–217 (KKEEPKVVVSPEKTEKKEEKPV) and 265–315 (SKEE…DPNG). Residues 514–684 (HRAPIVTVMG…LLEAEMLDLK (171 aa)) form the tr-type G domain. The tract at residues 523 to 530 (GHVDHGKT) is G1. 523 to 530 (GHVDHGKT) contacts GTP. The interval 548-552 (GITQH) is G2. Residues 570–573 (DTPG) are G3. GTP contacts are provided by residues 570–574 (DTPGH) and 624–627 (NKID). The segment at 624 to 627 (NKID) is G4. A G5 region spans residues 660–662 (SAK).

This sequence belongs to the TRAFAC class translation factor GTPase superfamily. Classic translation factor GTPase family. IF-2 subfamily.

It is found in the cytoplasm. One of the essential components for the initiation of protein synthesis. Protects formylmethionyl-tRNA from spontaneous hydrolysis and promotes its binding to the 30S ribosomal subunits. Also involved in the hydrolysis of GTP during the formation of the 70S ribosomal complex. In Bacteroides fragilis (strain ATCC 25285 / DSM 2151 / CCUG 4856 / JCM 11019 / LMG 10263 / NCTC 9343 / Onslow / VPI 2553 / EN-2), this protein is Translation initiation factor IF-2.